The chain runs to 141 residues: uncharacterized protein (141 aa).

This is an uncharacterized protein from Human cytomegalovirus (strain AD169) (HHV-5).